We begin with the raw amino-acid sequence, 77 residues long: Acyl carrier protein (77 aa).

The Carrier domain occupies 2 to 77 (ADVLERVTKI…DAVTYIESHL (76 aa)). Ser-37 bears the O-(pantetheine 4'-phosphoryl)serine mark.

Belongs to the acyl carrier protein (ACP) family. 4'-phosphopantetheine is transferred from CoA to a specific serine of apo-ACP by AcpS. This modification is essential for activity because fatty acids are bound in thioester linkage to the sulfhydryl of the prosthetic group.

Its subcellular location is the cytoplasm. It functions in the pathway lipid metabolism; fatty acid biosynthesis. In terms of biological role, carrier of the growing fatty acid chain in fatty acid biosynthesis. The protein is Acyl carrier protein of Bacillus anthracis (strain A0248).